The following is a 186-amino-acid chain: Glycerol-3-phosphate acyltransferase 1 (186 aa).

Helical transmembrane passes span 9–29, 58–78, 85–105, 121–141, and 161–181; these read MQFL…AYIV, GYFV…VSIA, STFV…PVLF, IAFD…FYLI, and ILYS…VLIL.

Belongs to the PlsY family. Probably interacts with PlsX.

It localises to the cell membrane. It carries out the reaction an acyl phosphate + sn-glycerol 3-phosphate = a 1-acyl-sn-glycero-3-phosphate + phosphate. It functions in the pathway lipid metabolism; phospholipid metabolism. In terms of biological role, catalyzes the transfer of an acyl group from acyl-phosphate (acyl-PO(4)) to glycerol-3-phosphate (G3P) to form lysophosphatidic acid (LPA). This enzyme utilizes acyl-phosphate as fatty acyl donor, but not acyl-CoA or acyl-ACP. This chain is Glycerol-3-phosphate acyltransferase 1, found in Bacillus cereus (strain ZK / E33L).